The chain runs to 659 residues: RNA-binding protein MIP6 (659 aa).

Residues 1 to 27 show a composition bias toward polar residues; sequence MPNSHGNVLNNISLNSKQNPRSISKSC. Residues 1–35 form a disordered region; sequence MPNSHGNVLNNISLNSKQNPRSISKSCPNDKDARQ. RRM domains are found at residues 111-189, 199-267, and 313-389; these read NSLF…PSMK, TNVF…GNKI, and KTIL…PGKD.

Interacts with MEX67.

Its subcellular location is the cytoplasm. In Saccharomyces cerevisiae (strain ATCC 204508 / S288c) (Baker's yeast), this protein is RNA-binding protein MIP6 (MIP6).